The sequence spans 414 residues: Gamma-glutamyl phosphate reductase (414 aa).

Belongs to the gamma-glutamyl phosphate reductase family.

Its subcellular location is the cytoplasm. It catalyses the reaction L-glutamate 5-semialdehyde + phosphate + NADP(+) = L-glutamyl 5-phosphate + NADPH + H(+). It functions in the pathway amino-acid biosynthesis; L-proline biosynthesis; L-glutamate 5-semialdehyde from L-glutamate: step 2/2. Functionally, catalyzes the NADPH-dependent reduction of L-glutamate 5-phosphate into L-glutamate 5-semialdehyde and phosphate. The product spontaneously undergoes cyclization to form 1-pyrroline-5-carboxylate. This is Gamma-glutamyl phosphate reductase from Francisella philomiragia subsp. philomiragia (strain ATCC 25017 / CCUG 19701 / FSC 153 / O#319-036).